Consider the following 508-residue polypeptide: Lysine--tRNA ligase (508 aa).

2 residues coordinate Mg(2+): Glu-418 and Glu-425.

This sequence belongs to the class-II aminoacyl-tRNA synthetase family. Homodimer. The cofactor is Mg(2+).

It localises to the cytoplasm. It catalyses the reaction tRNA(Lys) + L-lysine + ATP = L-lysyl-tRNA(Lys) + AMP + diphosphate. The chain is Lysine--tRNA ligase from Burkholderia pseudomallei (strain 668).